The chain runs to 354 residues: Transcription factor HHO2 (354 aa).

Residues 93 to 102 (VQEEEEEDGE) are compositionally biased toward acidic residues. Positions 93–112 (VQEEEEEDGEHESSPELVNN) are disordered. Positions 103 to 112 (HESSPELVNN) are enriched in basic and acidic residues. An HTH myb-type domain is found at 212–272 (THRKQRRCWS…HLQKYRLHTR (61 aa)). A DNA-binding region (H-T-H motif) is located at residues 243–268 (PKQIRDHMKVDGLTNDEVKSHLQKYR). The interval 324–354 (VAQSPKRSLERSCNSPAASSSTNTNTSTPVS) is disordered. Low complexity predominate over residues 337 to 354 (NSPAASSSTNTNTSTPVS).

It localises to the nucleus. Probable transcription factor involved in phosphate homeostasis. Involved in the regulation of the developmental response of lateral roots, acquisition and/or mobilization of phosphate and expression of a subset of genes involved in phosphate sensing and signaling pathway. Is a target of the transcription factor PHR1. This is Transcription factor HHO2 from Arabidopsis thaliana (Mouse-ear cress).